A 520-amino-acid chain; its full sequence is Membrane-bound glycerophospholipid O-acyltransferase 2 (520 aa).

6 consecutive transmembrane segments (helical) span residues 22–42 (PIDQVNFVVCQLFALLAAIWF), 61–81 (TLLGLYLALFCFGWYALHFLV), 88–108 (CIMIIIGVENMHNYCFVFALG), 184–204 (FMGILAGPLCSYKDYITFIEG), 237–257 (LLVCGLSLLFHLTICTTLPVE), and 264–284 (FQATASWPTKIIYLYISLLAA). Active-site residues include Asn-342 and His-373. The next 3 membrane-spanning stretches (helical) occupy residues 366–386 (FILSAIWHGVYPGYYLTFLTG), 416–436 (VITWIVTQVAISYTVVPFVLL), and 444–464 (FYSSWYYCLHILGILVLLLLP).

The protein belongs to the membrane-bound acyltransferase family. In terms of tissue distribution, expressed in neutrophils.

It localises to the endoplasmic reticulum membrane. It catalyses the reaction a 1-acyl-sn-glycero-3-phosphocholine + an acyl-CoA = a 1,2-diacyl-sn-glycero-3-phosphocholine + CoA. It carries out the reaction a 1-acyl-sn-glycero-3-phosphoethanolamine + an acyl-CoA = a 1,2-diacyl-sn-glycero-3-phosphoethanolamine + CoA. The enzyme catalyses a 1-acyl-sn-glycero-3-phosphate + an acyl-CoA = a 1,2-diacyl-sn-glycero-3-phosphate + CoA. The catalysed reaction is (9Z)-hexadecenoyl-CoA + 1-hexadecanoyl-sn-glycero-3-phosphocholine = 1-hexadecanoyl-2-(9Z-hexadecenoyl)-sn-glycero-3-phosphocholine + CoA. It catalyses the reaction 1-hexadecanoyl-sn-glycero-3-phosphoethanolamine + (9Z)-octadecenoyl-CoA = 1-hexadecanoyl-2-(9Z-octadecenoyl)-sn-glycero-3-phosphoethanolamine + CoA. It carries out the reaction 1-hexadecanoyl-sn-glycero-3-phosphoethanolamine + (9Z)-hexadecenoyl-CoA = 1-hexadecanoyl-2-(9Z)-hexadecenoyl-sn-glycero-3-phosphoethanolamine + CoA. The enzyme catalyses 1-(9Z-octadecenoyl)-sn-glycero-3-phospho-L-serine + hexadecanoyl-CoA = 1-(9Z)-octadecenoyl-2-hexadecanoyl-sn-glycero-3-phosphoserine + CoA. The catalysed reaction is (9Z,12Z)-octadecadienoyl-CoA + 1-hexadecanoyl-sn-glycero-3-phosphocholine = 1-hexadecanoyl-2-(9Z,12Z-octadecadienoyl)-sn-glycero-3-phosphocholine + CoA. It catalyses the reaction 1-hexadecanoyl-sn-glycero-3-phosphocholine + (9Z)-octadecenoyl-CoA = 1-hexadecanoyl-2-(9Z-octadecenoyl)-sn-glycero-3-phosphocholine + CoA. It carries out the reaction 1-hexadecanoyl-sn-glycero-3-phosphate + (9Z)-hexadecenoyl-CoA = 1-hexadecanoyl-2-[(9Z)-hexadec-9-enoyl]-sn-glycero-3-phosphate + CoA. The enzyme catalyses 1-hexadecanoyl-sn-glycero-3-phosphate + (9Z)-octadecenoyl-CoA = 1-hexadecanoyl-2-(9Z-octadecenoyl)-sn-glycero-3-phosphate + CoA. The catalysed reaction is a 1-O-(1Z-alkenyl)-sn-glycero-3-phosphocholine + (9Z)-octadecenoyl-CoA = 1-O-(1Z)-alkenyl-2-(9Z)-octadecenoyl-sn-glycero-3-phosphocholine + CoA. It catalyses the reaction a 1-O-(1Z-alkenyl)-sn-glycero-3-phosphoethanolamine + (9Z)-octadecenoyl-CoA = 1-O-(1Z)-alkenyl-2-(9Z)-octadecenoyl-sn-glycero-3-phosphoethanolamine + CoA. It carries out the reaction 1-octadecanoyl-sn-glycero-3-phosphoethanolamine + (9Z)-octadecenoyl-CoA = 1-octadecanoyl-2-(9Z-octadecenoyl)-sn-glycero-3-phosphoethanolamine + CoA. The enzyme catalyses 1-octadecanoyl-sn-glycero-3-phosphocholine + (9Z)-octadecenoyl-CoA = 1-octadecanoyl-2-(9Z-octadecenoyl)-sn-glycero-3-phosphocholine + CoA. The catalysed reaction is 1-(9Z-octadecenoyl)-sn-glycero-3-phosphoethanolamine + (9Z)-octadecenoyl-CoA = 1,2-di-(9Z-octadecenoyl)-sn-glycero-3-phosphoethanolamine + CoA. It functions in the pathway lipid metabolism; phospholipid metabolism. Its activity is regulated as follows. Partially inhibited by thimerosal. In terms of biological role, acyltransferase which catalyzes the transfer of an acyl group from an acyl-CoA to a lysophospholipid leading to the production of a phospholipid and participates in the reacylation step of the phospholipid remodeling pathway also known as the Lands cycle. Catalyzes preferentially the acylation of lysophosphatidylethanolamine (1-acyl-sn-glycero-3-phosphoethanolamine or LPE) and lysophosphatidic acid (LPA) and to a lesser extend lysophosphatidylcholine (LPC) and lysophosphatidylserine (LPS). Prefers oleoyl-CoA as the acyl donor. May be involved in chondrocyte differentiation. The protein is Membrane-bound glycerophospholipid O-acyltransferase 2 of Homo sapiens (Human).